A 233-amino-acid chain; its full sequence is uncharacterized protein (233 aa).

Zn(2+) is bound by residues histidine 64, histidine 66, aspartate 68, histidine 69, histidine 143, aspartate 162, and histidine 212.

The protein belongs to the metallo-beta-lactamase superfamily. Glyoxalase II family. The cofactor is Zn(2+).

This is an uncharacterized protein from Bacillus subtilis (strain 168).